Consider the following 509-residue polypeptide: Aspartic proteinase oryzasin-1 (509 aa).

A signal peptide spans 1–24; that stretch reads MGTRSVALVLLAAVLLQALLPASA. A propeptide spans 25–67 (activation peptide); that stretch reads AEGLVRIALKKRPIDENSRVAARLSGEEGARRLGLRGANSLGG. In terms of domain architecture, Peptidase A1 spans 85-506; sequence YFGEIGVGTP…DYGKMRVGFA (422 aa). The active site involves Asp103. Cys116 and Cys122 are joined by a disulfide. N-linked (GlcNAc...) asparagine glycosylation occurs at Asn252. Residues Cys281 and Cys285 are joined by a disulfide bond. Residue Asp290 is part of the active site. The Saposin B-type domain occupies 315-420; sequence VVSQECKTVV…NQLCDKLPSP (106 aa). Cystine bridges form between Cys320–Cys414, Cys345–Cys386, Cys351–Cys383, and Cys428–Cys465. A glycan (N-linked (GlcNAc...) asparagine) is linked at Asn400.

Belongs to the peptidase A1 family.

The protein localises to the vacuole. Functionally, involved in the breakdown of propeptides of storage proteins in protein-storage vacuoles. This chain is Aspartic proteinase oryzasin-1, found in Oryza sativa subsp. japonica (Rice).